The sequence spans 385 residues: Meiotic recombination protein SPO11-2 (385 aa).

A Topo IIA-type catalytic domain is found at Leu24–Ala169. Catalysis depends on Tyr126, which acts as the O-(5'-phospho-DNA)-tyrosine intermediate. The Mg(2+) site is built by Glu219 and Asp272.

It belongs to the TOP6A family. In terms of assembly, interacts with TOP6B. Mg(2+) serves as cofactor.

It localises to the nucleus. It carries out the reaction ATP-dependent breakage, passage and rejoining of double-stranded DNA.. Its function is as follows. Required for meiotic recombination. Mediates DNA cleavage that forms the double-strand breaks (DSB) that initiate meiotic recombination. The protein is Meiotic recombination protein SPO11-2 (SPO11-2) of Oryza sativa subsp. japonica (Rice).